A 283-amino-acid polypeptide reads, in one-letter code: uncharacterized protein (283 aa).

The N-terminal stretch at 1-23 (MFAFASFAISAIFFLCSFSYVSS) is a signal peptide.

It localises to the secreted. This is an uncharacterized protein from Schizosaccharomyces pombe (strain 972 / ATCC 24843) (Fission yeast).